The sequence spans 129 residues: Glycine cleavage system H protein (129 aa).

The region spanning L24–R106 is the Lipoyl-binding domain. K65 carries the post-translational modification N6-lipoyllysine.

Belongs to the GcvH family. As to quaternary structure, the glycine cleavage system is composed of four proteins: P, T, L and H. Requires (R)-lipoate as cofactor.

The glycine cleavage system catalyzes the degradation of glycine. The H protein shuttles the methylamine group of glycine from the P protein to the T protein. The chain is Glycine cleavage system H protein from Synechococcus sp. (strain CC9902).